The following is a 130-amino-acid chain: Mini-ribonuclease 3 (130 aa).

Residue D19 is part of the active site. A disordered region spans residues 69–91; the sequence is EQDVVRRGRNAKGHGAPKSADPA.

It belongs to the MrnC RNase family. As to quaternary structure, homodimer. Mg(2+) is required as a cofactor.

The protein resides in the cytoplasm. Its function is as follows. Involved in correct processing of both the 5' and 3' ends of 23S rRNA precursor. Processes 30S rRNA precursor transcript even in absence of ribonuclease 3 (Rnc); Rnc processes 30S rRNA into smaller rRNA precursors. The polypeptide is Mini-ribonuclease 3 (Symbiobacterium thermophilum (strain DSM 24528 / JCM 14929 / IAM 14863 / T)).